A 160-amino-acid chain; its full sequence is Epithelial membrane protein 1 (160 aa).

The chain crosses the membrane as a helical span at residues 1–21 (MLVLLAGLFVVHIATAIMLFV). 2 N-linked (GlcNAc...) asparagine glycosylation sites follow: Asn35 and Asn43. The next 2 membrane-spanning stretches (helical) occupy residues 67–87 (FMIL…FQLF) and 95–115 (FFLS…GVSI). Asn128 is a glycosylation site (N-linked (GlcNAc...) asparagine). A helical membrane pass occupies residues 137–157 (FILTWICFCFSFIIGILYMVL).

Belongs to the PMP-22/EMP/MP20 family.

The protein resides in the membrane. The chain is Epithelial membrane protein 1 (Emp1) from Mus musculus (Mouse).